Here is a 426-residue protein sequence, read N- to C-terminus: Glutamate-1-semialdehyde 2,1-aminomutase (426 aa).

Lys-265 carries the post-translational modification N6-(pyridoxal phosphate)lysine.

The protein belongs to the class-III pyridoxal-phosphate-dependent aminotransferase family. HemL subfamily. As to quaternary structure, homodimer. It depends on pyridoxal 5'-phosphate as a cofactor.

The protein localises to the cytoplasm. It catalyses the reaction (S)-4-amino-5-oxopentanoate = 5-aminolevulinate. It functions in the pathway porphyrin-containing compound metabolism; protoporphyrin-IX biosynthesis; 5-aminolevulinate from L-glutamyl-tRNA(Glu): step 2/2. The sequence is that of Glutamate-1-semialdehyde 2,1-aminomutase from Escherichia coli O157:H7.